Consider the following 450-residue polypeptide: FAD-linked oxidoreductase penO (450 aa).

Residues 32-203 (PPELPYAIVK…TRFFIRTRPA (172 aa)) enclose the FAD-binding PCMH-type domain.

Belongs to the oxygen-dependent FAD-linked oxidoreductase family. FAD is required as a cofactor.

It participates in secondary metabolite biosynthesis. In terms of biological role, FAD-linked oxidoreductase; part of the gene cluster that mediates the biosynthesis of the indole diterpenes penitrems. The geranylgeranyl diphosphate (GGPP) synthase penG catalyzes the first step in penitrem biosynthesis via conversion of farnesyl pyrophosphate and isopentyl pyrophosphate into geranylgeranyl pyrophosphate (GGPP). Condensation of indole-3-glycerol phosphate with GGPP by the prenyl transferase penC then forms 3-geranylgeranylindole (3-GGI). Epoxidation by the FAD-dependent monooxygenase penM leads to a epoxidized-GGI that is substrate of the terpene cyclase penB for cyclization to yield paspaline. Paspaline is subsequently converted to 13-desoxypaxilline by the cytochrome P450 monooxygenase penP, the latter being then converted to paxilline by the cytochrome P450 monooxygenase penQ. Paxilline is converted to beta-paxitriol via C-10 ketoreduction by the short-chain dehydrogenase PC-15 which can be monoprenylated at the C-20 by the indole diterpene prenyltransferase penD. A two-step elimination (acetylation and elimination) process performed by the O-acetyltransferase PC-16 and the P.simplicissimum ptmI-ortholog not yet identified in P.crustosum, leads to the production of the prenylated form of penijanthine. The FAD-linked oxidoreductase ptmO then converts the prenylated form of penijanthine into PC-M5 which is in turn transformed into PC-M4 by the aromatic dimethylallyltransferase PC-22. A series of oxidation steps involving 4 cytochrome P450 monooxygenases (PC-21, PC-05, PC-23, PC-20) and a FAD-dependent monooxygenase (PC-14) are required for the transformation of PC-M4 to penitrems A and E. Synthesis of these final products is proposed to proceed via penitrems D and C (PC-21, PC-05, PC-14) and penitrems B and F (PC-21, PC-05, PC-14, PC-23). This Penicillium crustosum (Blue mold fungus) protein is FAD-linked oxidoreductase penO.